A 412-amino-acid polypeptide reads, in one-letter code: Lipoyl synthase, mitochondrial (412 aa).

Residues cysteine 127, cysteine 132, cysteine 138, cysteine 159, cysteine 163, cysteine 166, and serine 375 each contribute to the [4Fe-4S] cluster site. The Radical SAM core domain maps to 142–364 (SDDEGTATAT…EKEAMDMGFL (223 aa)).

This sequence belongs to the radical SAM superfamily. Lipoyl synthase family. Requires [4Fe-4S] cluster as cofactor.

Its subcellular location is the mitochondrion. It catalyses the reaction [[Fe-S] cluster scaffold protein carrying a second [4Fe-4S](2+) cluster] + N(6)-octanoyl-L-lysyl-[protein] + 2 oxidized [2Fe-2S]-[ferredoxin] + 2 S-adenosyl-L-methionine + 4 H(+) = [[Fe-S] cluster scaffold protein] + N(6)-[(R)-dihydrolipoyl]-L-lysyl-[protein] + 4 Fe(3+) + 2 hydrogen sulfide + 2 5'-deoxyadenosine + 2 L-methionine + 2 reduced [2Fe-2S]-[ferredoxin]. The protein operates within protein modification; protein lipoylation via endogenous pathway; protein N(6)-(lipoyl)lysine from octanoyl-[acyl-carrier-protein]: step 2/2. In terms of biological role, catalyzes the radical-mediated insertion of two sulfur atoms into the C-6 and C-8 positions of the octanoyl moiety bound to the lipoyl domains of lipoate-dependent enzymes, thereby converting the octanoylated domains into lipoylated derivatives. This is Lipoyl synthase, mitochondrial from Leishmania infantum.